A 310-amino-acid polypeptide reads, in one-letter code: Protease HtpX homolog (310 aa).

The next 2 helical transmembrane spans lie at asparagine 16–isoleucine 36 and isoleucine 55–isoleucine 75. Histidine 166 provides a ligand contact to Zn(2+). Glutamate 167 is an active-site residue. A Zn(2+)-binding site is contributed by histidine 170. Transmembrane regions (helical) follow at residues valine 182–glycine 202 and methionine 214–leucine 234. Glutamate 239 is a Zn(2+) binding site.

Belongs to the peptidase M48B family. It depends on Zn(2+) as a cofactor.

It localises to the cell inner membrane. This chain is Protease HtpX homolog, found in Helicobacter pylori (strain J99 / ATCC 700824) (Campylobacter pylori J99).